Here is a 511-residue protein sequence, read N- to C-terminus: Phosphoenolpyruvate carboxylase (511 aa).

Belongs to the PEPCase type 2 family. As to quaternary structure, homotetramer. Requires Mg(2+) as cofactor.

It carries out the reaction oxaloacetate + phosphate = phosphoenolpyruvate + hydrogencarbonate. With respect to regulation, allosterically inhibited by L-aspartate and L-malate. PEPC activity is not affected by allosteric activators of E.coli PEPC such as glucose 6-phosphate, fructose 1,6-bisphosphate, and acetyl coenzyme A. In terms of biological role, catalyzes the irreversible beta-carboxylation of phosphoenolpyruvate (PEP) to form oxaloacetate (OAA), a four-carbon dicarboxylic acid source for the tricarboxylic acid cycle. This chain is Phosphoenolpyruvate carboxylase, found in Saccharolobus solfataricus (strain ATCC 35092 / DSM 1617 / JCM 11322 / P2) (Sulfolobus solfataricus).